Here is a 1162-residue protein sequence, read N- to C-terminus: Topoisomerase 1-associated factor 1 (1162 aa).

2 disordered regions span residues 977–1017 and 1127–1162; these read TEGR…EANA and TQVV…DTEY. The span at 993-1003 shows a compositional bias: basic residues; that stretch reads QRSKGKRKAIA.

Belongs to the timeless family. As to quaternary structure, component of the fork protection complex (FPC) consisting of TOF1 and CSM3.

It localises to the nucleus. Forms a fork protection complex (FPC) with CSM3 and which is required for chromosome segregation during meiosis and DNA damage repair. FPC coordinates leading and lagging strand synthesis and moves with the replication fork. FPC stabilizes replication forks in a configuration that is recognized by replication checkpoint sensors. This is Topoisomerase 1-associated factor 1 (TOF1) from Kluyveromyces lactis (strain ATCC 8585 / CBS 2359 / DSM 70799 / NBRC 1267 / NRRL Y-1140 / WM37) (Yeast).